Here is a 68-residue protein sequence, read N- to C-terminus: Protein transport protein Sec61 subunit gamma (68 aa).

Residues 1 to 32 (MDQVTKFIEPGRQFAKDSIRLVKRCTKPDRKE) are Cytoplasmic-facing. A helical transmembrane segment spans residues 33–61 (FQKIAVATAIGFCIMGFIGFFVKLIHIPI). Residues 62–68 (NNIIVGS) lie on the Extracellular side of the membrane.

It belongs to the SecE/SEC61-gamma family. Heterotrimeric complex composed of SEC61-alpha, SEC61-beta and SEC61-gamma.

The protein resides in the endoplasmic reticulum membrane. Functionally, necessary for protein translocation in the endoplasmic reticulum. The polypeptide is Protein transport protein Sec61 subunit gamma (SEC61G) (Gryllotalpa orientalis (Oriental mole cricket)).